The following is a 460-amino-acid chain: Hydroxymethylglutaryl-CoA synthase erg13B (460 aa).

Glu-86 functions as the Proton donor/acceptor in the catalytic mechanism. Catalysis depends on Cys-120, which acts as the Acyl-thioester intermediate. (3S)-3-hydroxy-3-methylglutaryl-CoA-binding residues include Cys-120, Thr-162, Ser-212, His-263, Lys-272, Asn-340, and Ser-374. Residue His-263 is the Proton donor/acceptor of the active site.

The protein belongs to the thiolase-like superfamily. HMG-CoA synthase family.

The catalysed reaction is acetoacetyl-CoA + acetyl-CoA + H2O = (3S)-3-hydroxy-3-methylglutaryl-CoA + CoA + H(+). Its pathway is metabolic intermediate biosynthesis; (R)-mevalonate biosynthesis; (R)-mevalonate from acetyl-CoA: step 2/3. In terms of biological role, hydroxymethylglutaryl-CoA synthase; part of the first module of ergosterol biosynthesis pathway that includes the early steps of the pathway, conserved across all eukaryotes, and which results in the formation of mevalonate from acetyl-coenzyme A (acetyl-CoA). Erg13A and erg13B condense acetyl-CoA with acetoacetyl-CoA to form hydroxymethylglutaryl-CoA (HMG-CoA). The first module starts with the action of the cytosolic acetyl-CoA acetyltransferase erg10B that catalyzes the formation of acetoacetyl-CoA. The hydroxymethylglutaryl-CoA synthases erg13A and erg13B then condense acetyl-CoA with acetoacetyl-CoA to form HMG-CoA. The rate-limiting step of the early module is the reduction to mevalonate by the 3-hydroxy-3-methylglutaryl-coenzyme A (HMG-CoA) reductases hmg1 and hmg2. Mevalonate is also a precursor for the extracellular siderophore triacetylfusarinine C (TAFC). The protein is Hydroxymethylglutaryl-CoA synthase erg13B of Aspergillus fumigatus (strain ATCC MYA-4609 / CBS 101355 / FGSC A1100 / Af293) (Neosartorya fumigata).